The following is a 218-amino-acid chain: GTP cyclohydrolase 1 (218 aa).

Positions 107, 110, and 178 each coordinate Zn(2+).

Belongs to the GTP cyclohydrolase I family. Homomer.

It catalyses the reaction GTP + H2O = 7,8-dihydroneopterin 3'-triphosphate + formate + H(+). It participates in cofactor biosynthesis; 7,8-dihydroneopterin triphosphate biosynthesis; 7,8-dihydroneopterin triphosphate from GTP: step 1/1. In Azorhizobium caulinodans (strain ATCC 43989 / DSM 5975 / JCM 20966 / LMG 6465 / NBRC 14845 / NCIMB 13405 / ORS 571), this protein is GTP cyclohydrolase 1.